A 497-amino-acid chain; its full sequence is Alkene monooxygenase system, oxygenase component subunit alpha (497 aa).

Residues glutamate 104, glutamate 134, histidine 137, glutamate 197, glutamate 231, and histidine 234 each coordinate Fe cation.

The protein belongs to the TmoA/XamoA family. The alkene monooxygenase multicomponent enzyme system is composed of an electron transfer component and a monooxygenase component interacting with the effector protein XamoD. The electron transfer component is composed of a ferredoxin reductase (XamoF) and a ferredoxin (XamoC), and the monooxygenase component is formed by a heterohexamer (dimer of heterotrimers) of two alpha subunits (XamoA), two beta subunits (XamoE) and two gamma subunits (XamoB). Fe(2+) is required as a cofactor.

Its subcellular location is the cytoplasm. The catalysed reaction is propene + NADH + O2 + H(+) = 1,2-epoxypropane + NAD(+) + H2O. With respect to regulation, inhibited by propyne. In terms of biological role, component of the alkene monooxygenase multicomponent enzyme system which catalyzes the O2- and NADH-dependent epoxidation of short chain (C2 to C6) alkenes to their corresponding epoxides. Also able to catalyze the oxidation of a number of chlorinated alkenes, including trichloroethylene, cis- and trans-1,2-dichloroethylene, vinyl chloride, 1-chloropropylene, 1,3-dichloropropylene and 2,3-dichloropropylene. This is Alkene monooxygenase system, oxygenase component subunit alpha from Xanthobacter autotrophicus (strain ATCC BAA-1158 / Py2).